A 247-amino-acid chain; its full sequence is ATP synthase subunit a, chloroplastic (247 aa).

5 consecutive transmembrane segments (helical) span residues 38 to 58, 95 to 115, 134 to 154, 199 to 219, and 220 to 240; these read QVLITSWVVIAILLASATLAV, VPFIGTMFLFIFVSNWSGALL, INTTVALALLTSVAYFYAGLS, LVVVVLVSLVPSVVPIPVMFL, and GLFTSGIQALIFATLAAAYIG.

It belongs to the ATPase A chain family. In terms of assembly, F-type ATPases have 2 components, CF(1) - the catalytic core - and CF(0) - the membrane proton channel. CF(1) has five subunits: alpha(3), beta(3), gamma(1), delta(1), epsilon(1). CF(0) has four main subunits: a, b, b' and c.

It localises to the plastid. Its subcellular location is the chloroplast thylakoid membrane. Key component of the proton channel; it plays a direct role in the translocation of protons across the membrane. This Lactuca sativa (Garden lettuce) protein is ATP synthase subunit a, chloroplastic.